We begin with the raw amino-acid sequence, 251 residues long: MAPGYQPPSPEEKEQYVRELFDKIAENYDAMNQVMSAGQWEKWHREFVAQTHFRPGDHILDVACGTGDLTLLDAAQVAPDGKVIGVDISEGMLEVGRRRVAASPYKDLITLQLGNAMDLPFPDNTFDGVTMGWAMRNVASIPRTLSEIYRVLKPGGRFICLEASKPFSRFIRFGFFVYWKTFLPLIDWFVVKAGRQAKVRPYTYLSRSLDNYPFPDQLEELFREAGFVETDYQLLMLGTVAIHVGTKRREG.

Residues threonine 66, aspartate 87, and 115 to 116 (NA) each bind S-adenosyl-L-methionine.

The protein belongs to the class I-like SAM-binding methyltransferase superfamily. MenG/UbiE family.

It carries out the reaction a 2-demethylmenaquinol + S-adenosyl-L-methionine = a menaquinol + S-adenosyl-L-homocysteine + H(+). It functions in the pathway quinol/quinone metabolism; menaquinone biosynthesis; menaquinol from 1,4-dihydroxy-2-naphthoate: step 2/2. Functionally, methyltransferase required for the conversion of demethylmenaquinol (DMKH2) to menaquinol (MKH2). This Symbiobacterium thermophilum (strain DSM 24528 / JCM 14929 / IAM 14863 / T) protein is Demethylmenaquinone methyltransferase.